A 305-amino-acid chain; its full sequence is Protoheme IX farnesyltransferase (305 aa).

The next 9 membrane-spanning stretches (helical) occupy residues 31–51 (VISL…YSVH), 52–72 (PFIA…AGAI), 96–118 (VIES…FFMA), 123–145 (LLAS…IWLK), 151–171 (NIVI…AAVS), 179–199 (IILF…LALF), 225–245 (ILIY…IGMN), 247–267 (FIYL…AGSL), and 281–301 (FAYS…TNTI).

It belongs to the UbiA prenyltransferase family. Protoheme IX farnesyltransferase subfamily.

It is found in the cell inner membrane. It catalyses the reaction heme b + (2E,6E)-farnesyl diphosphate + H2O = Fe(II)-heme o + diphosphate. The protein operates within porphyrin-containing compound metabolism; heme O biosynthesis; heme O from protoheme: step 1/1. Converts heme B (protoheme IX) to heme O by substitution of the vinyl group on carbon 2 of heme B porphyrin ring with a hydroxyethyl farnesyl side group. This Rickettsia massiliae (strain Mtu5) protein is Protoheme IX farnesyltransferase.